Here is a 157-residue protein sequence, read N- to C-terminus: Putative tRNA (cytidine(34)-2'-O)-methyltransferase (157 aa).

S-adenosyl-L-methionine-binding residues include I79, G104, and I125.

It belongs to the class IV-like SAM-binding methyltransferase superfamily. RNA methyltransferase TrmH family. TrmL subfamily.

It localises to the cytoplasm. It catalyses the reaction cytidine(34) in tRNA + S-adenosyl-L-methionine = 2'-O-methylcytidine(34) in tRNA + S-adenosyl-L-homocysteine + H(+). The catalysed reaction is 5-carboxymethylaminomethyluridine(34) in tRNA(Leu) + S-adenosyl-L-methionine = 5-carboxymethylaminomethyl-2'-O-methyluridine(34) in tRNA(Leu) + S-adenosyl-L-homocysteine + H(+). Functionally, could methylate the ribose at the nucleotide 34 wobble position in tRNA. This Geobacillus stearothermophilus (Bacillus stearothermophilus) protein is Putative tRNA (cytidine(34)-2'-O)-methyltransferase.